A 424-amino-acid polypeptide reads, in one-letter code: COUP transcription factor 1 (424 aa).

Residues 1 to 82 (MAMVVSSWRD…QGPPGSGQSQ (82 aa)) are disordered. Low complexity predominate over residues 39–68 (EQQQQQAGSGAPHTPQTPGQPGAPATPGTA). Positions 84–159 (HIECVVCGDK…VGMRREAVQR (76 aa)) form a DNA-binding region, nuclear receptor. 2 consecutive NR C4-type zinc fingers follow at residues 87–107 (CVVCGDKSSGKHYGQFTCEGC) and 123–147 (CRANRNCPIDQHHRNQCQYCRLKKC). One can recognise an NR LBD domain in the interval 185–411 (YLSGYISLLL…TLIRDMLLSG (227 aa)).

It belongs to the nuclear hormone receptor family. NR2 subfamily. In terms of assembly, binds DNA as dimer; homodimer and probable heterodimer with NR2F6. Interacts with GTF2B; this interaction is direct. Interacts with COPS2.

It is found in the nucleus. Coup (chicken ovalbumin upstream promoter) transcription factor binds to the ovalbumin promoter and, in conjunction with another protein (S300-II) stimulates initiation of transcription. Binds to both direct repeats and palindromes of the 5'-AGGTCA-3' motif. Represses transcriptional activity of LHCG. The sequence is that of COUP transcription factor 1 (NR2F1) from Bos taurus (Bovine).